The primary structure comprises 355 residues: Peptide chain release factor 1 (355 aa).

Q232 carries the post-translational modification N5-methylglutamine.

Belongs to the prokaryotic/mitochondrial release factor family. Post-translationally, methylated by PrmC. Methylation increases the termination efficiency of RF1.

The protein resides in the cytoplasm. Functionally, peptide chain release factor 1 directs the termination of translation in response to the peptide chain termination codons UAG and UAA. The protein is Peptide chain release factor 1 of Thermobifida fusca (strain YX).